Consider the following 446-residue polypeptide: Phosphoglucosamine mutase (446 aa).

The active-site Phosphoserine intermediate is Ser-102. Positions 102, 241, 243, and 245 each coordinate Mg(2+). Residue Ser-102 is modified to Phosphoserine.

The protein belongs to the phosphohexose mutase family. Mg(2+) serves as cofactor. Post-translationally, activated by phosphorylation.

It carries out the reaction alpha-D-glucosamine 1-phosphate = D-glucosamine 6-phosphate. Its function is as follows. Catalyzes the conversion of glucosamine-6-phosphate to glucosamine-1-phosphate. This chain is Phosphoglucosamine mutase, found in Xylella fastidiosa (strain M12).